Reading from the N-terminus, the 244-residue chain is Heat stress transcription factor B-3 (244 aa).

Residues 38–132 mediate DNA binding; that stretch reads PPPFLVKTYK…LMSNIRRRKS (95 aa). Residues 173–218 form a hydrophobic repeat HR-A/B region; it reads TSSSFVYTALLDENKCLKNENELLSCELGKTKKKCKQLMELVERYR. The Nuclear localization signal motif lies at 202-208; sequence KTKKKCK. The interval 216 to 244 is disordered; the sequence is RYRGEDEDATDESDDEEDEGLKLFGVKLE. Positions 220-234 are enriched in acidic residues; it reads EDEDATDESDDEEDE. Residues 236-243 carry the Nuclear export signal motif; it reads LKLFGVKL.

Belongs to the HSF family. Class B subfamily. Homotrimer. Post-translationally, exhibits temperature-dependent phosphorylation.

It localises to the cytoplasm. The protein localises to the nucleus. In terms of biological role, transcriptional regulator that specifically binds DNA sequence 5'-AGAAnnTTCT-3' known as heat shock promoter elements (HSE). The chain is Heat stress transcription factor B-3 (HSFB3) from Arabidopsis thaliana (Mouse-ear cress).